Consider the following 283-residue polypeptide: Putative pyruvate, phosphate dikinase regulatory protein (283 aa).

Position 154–161 (154–161) interacts with ADP; sequence GVSRTSKT.

This sequence belongs to the pyruvate, phosphate/water dikinase regulatory protein family. PDRP subfamily.

The catalysed reaction is N(tele)-phospho-L-histidyl/L-threonyl-[pyruvate, phosphate dikinase] + ADP = N(tele)-phospho-L-histidyl/O-phospho-L-threonyl-[pyruvate, phosphate dikinase] + AMP + H(+). It catalyses the reaction N(tele)-phospho-L-histidyl/O-phospho-L-threonyl-[pyruvate, phosphate dikinase] + phosphate + H(+) = N(tele)-phospho-L-histidyl/L-threonyl-[pyruvate, phosphate dikinase] + diphosphate. Functionally, bifunctional serine/threonine kinase and phosphorylase involved in the regulation of the pyruvate, phosphate dikinase (PPDK) by catalyzing its phosphorylation/dephosphorylation. The chain is Putative pyruvate, phosphate dikinase regulatory protein from Afipia carboxidovorans (strain ATCC 49405 / DSM 1227 / KCTC 32145 / OM5) (Oligotropha carboxidovorans).